We begin with the raw amino-acid sequence, 284 residues long: NAD(P)H-hydrate epimerase (284 aa).

A mitochondrion-targeting transit peptide spans 1–55; it reads MSGLRTLLGLGLLVSSSRFPRVVARGGPRCPGPAWWAARPMHLGDSTMAGGTVKY. In terms of domain architecture, YjeF N-terminal spans 61-271; sequence AQAVDEELFN…DLEKKYQLNL (211 aa). Position 115-119 (115-119) interacts with (6S)-NADPHX; that stretch reads NNGGD. Residue N116 coordinates K(+). At K140 the chain carries N6-succinyllysine. D181 is a K(+) binding site. (6S)-NADPHX-binding positions include 185–191 and D214; that span reads GFSFKGA. S217 contacts K(+).

Belongs to the NnrE/AIBP family. As to quaternary structure, homodimer. Interacts with APOA1 and APOA2. K(+) is required as a cofactor. In terms of processing, undergoes physiological phosphorylation during sperm capacitation, downstream to PKA activation.

It localises to the mitochondrion. It is found in the secreted. The catalysed reaction is (6R)-NADHX = (6S)-NADHX. It carries out the reaction (6R)-NADPHX = (6S)-NADPHX. Its function is as follows. Catalyzes the epimerization of the S- and R-forms of NAD(P)HX, a damaged form of NAD(P)H that is a result of enzymatic or heat-dependent hydration. This is a prerequisite for the S-specific NAD(P)H-hydrate dehydratase to allow the repair of both epimers of NAD(P)HX. Accelerates cholesterol efflux from endothelial cells to high-density lipoprotein (HDL) and thereby regulates angiogenesis. The sequence is that of NAD(P)H-hydrate epimerase from Monodelphis domestica (Gray short-tailed opossum).